A 357-amino-acid polypeptide reads, in one-letter code: P2Y purinoceptor 8 (357 aa).

The Extracellular portion of the chain corresponds to 1 to 26 (MVKNGSHLDAETLAMLQNKAISITLP). Asn4 carries an N-linked (GlcNAc...) asparagine glycan. A helical transmembrane segment spans residues 27–47 (VVYTMVAIISIPGNFFSLWVL). The Cytoplasmic segment spans residues 48–56 (CWHIKPKTP). Residues 57 to 77 (SVIFMINLSITDLLLACCFPF) form a helical membrane-spanning segment. Topologically, residues 78 to 97 (QIFYHIQRNHWIFGKTLCSL) are extracellular. A disulfide bridge connects residues Cys95 and Cys174. The chain crosses the membrane as a helical span at residues 98-118 (VTVMFYSNMYSSILTMTCISI). Residues 119–137 (ERYMGVVYPMKLIKWRRKR) are Cytoplasmic-facing. The helical transmembrane segment at 138–158 (YALGACVIMWIFLLLAFYPLE) threads the bilayer. Residues 159–185 (STDLTYEVKELGIITCFDVLKWEMLPN) lie on the Extracellular side of the membrane. The helical transmembrane segment at 186-206 (FAAWVAFLLTLFVVLFLIPFI) threads the bilayer. Residues 207-236 (VTVGCYIGTIRKLIQTSSRYGNKQKTRSIY) are Cytoplasmic-facing. The helical transmembrane segment at 237 to 257 (LAIIVLSVFITCFAPNNFILL) threads the bilayer. At 258-271 (AHMIVRLFYEGSLY) the chain is on the extracellular side. A helical membrane pass occupies residues 272 to 294 (PAYKLTLCLSCLNNCIDPFIYYF). The Cytoplasmic portion of the chain corresponds to 295–357 (ASKEFYQKFM…ICLQRQESVF (63 aa)).

Belongs to the G-protein coupled receptor 1 family.

The protein localises to the cell membrane. Functionally, probable receptor for purines coupled to G-proteins. This Gallus gallus (Chicken) protein is P2Y purinoceptor 8 (P2RY8).